A 195-amino-acid polypeptide reads, in one-letter code: FMN-dependent NADH:quinone oxidoreductase 2 (195 aa).

FMN is bound by residues 16-18 (SVS) and 85-88 (MWNL).

Belongs to the azoreductase type 1 family. In terms of assembly, homodimer. The cofactor is FMN.

The enzyme catalyses 2 a quinone + NADH + H(+) = 2 a 1,4-benzosemiquinone + NAD(+). It catalyses the reaction N,N-dimethyl-1,4-phenylenediamine + anthranilate + 2 NAD(+) = 2-(4-dimethylaminophenyl)diazenylbenzoate + 2 NADH + 2 H(+). In terms of biological role, quinone reductase that provides resistance to thiol-specific stress caused by electrophilic quinones. Also exhibits azoreductase activity. Catalyzes the reductive cleavage of the azo bond in aromatic azo compounds to the corresponding amines. The polypeptide is FMN-dependent NADH:quinone oxidoreductase 2 (Photobacterium profundum (strain SS9)).